Reading from the N-terminus, the 410-residue chain is Multifunctional CCA protein (410 aa).

Residues Gly8 and Arg11 each coordinate ATP. The CTP site is built by Gly8 and Arg11. Mg(2+) contacts are provided by Asp21 and Asp23. The ATP site is built by Arg91, Arg137, and Arg140. CTP-binding residues include Arg91, Arg137, and Arg140. Residues Thr228–Tyr329 form the HD domain.

The protein belongs to the tRNA nucleotidyltransferase/poly(A) polymerase family. Bacterial CCA-adding enzyme type 1 subfamily. In terms of assembly, monomer. Can also form homodimers and oligomers. Requires Mg(2+) as cofactor. The cofactor is Ni(2+).

The enzyme catalyses a tRNA precursor + 2 CTP + ATP = a tRNA with a 3' CCA end + 3 diphosphate. It catalyses the reaction a tRNA with a 3' CCA end + 2 CTP + ATP = a tRNA with a 3' CCACCA end + 3 diphosphate. Functionally, catalyzes the addition and repair of the essential 3'-terminal CCA sequence in tRNAs without using a nucleic acid template. Adds these three nucleotides in the order of C, C, and A to the tRNA nucleotide-73, using CTP and ATP as substrates and producing inorganic pyrophosphate. tRNA 3'-terminal CCA addition is required both for tRNA processing and repair. Also involved in tRNA surveillance by mediating tandem CCA addition to generate a CCACCA at the 3' terminus of unstable tRNAs. While stable tRNAs receive only 3'-terminal CCA, unstable tRNAs are marked with CCACCA and rapidly degraded. This chain is Multifunctional CCA protein, found in Pseudomonas paraeruginosa (strain DSM 24068 / PA7) (Pseudomonas aeruginosa (strain PA7)).